The chain runs to 639 residues: Threonine--tRNA ligase (639 aa).

In terms of domain architecture, TGS spans 1-61 (MIHITLPDGS…TQDSPLSIVT (61 aa)). Residues 242 to 533 (DHRKLGRELD…LIEEHAGALP (292 aa)) are catalytic. Zn(2+) is bound by residues Cys-333, His-384, and His-510.

It belongs to the class-II aminoacyl-tRNA synthetase family. As to quaternary structure, homodimer. Zn(2+) serves as cofactor.

The protein localises to the cytoplasm. The catalysed reaction is tRNA(Thr) + L-threonine + ATP = L-threonyl-tRNA(Thr) + AMP + diphosphate + H(+). Functionally, catalyzes the attachment of threonine to tRNA(Thr) in a two-step reaction: L-threonine is first activated by ATP to form Thr-AMP and then transferred to the acceptor end of tRNA(Thr). Also edits incorrectly charged L-seryl-tRNA(Thr). The chain is Threonine--tRNA ligase from Acidovorax sp. (strain JS42).